Consider the following 423-residue polypeptide: Methanol:N,N-dimethyl-4-nitrosoaniline oxidoreductase (423 aa).

The protein belongs to the iron-containing alcohol dehydrogenase family. As to quaternary structure, homodecamer. The cofactor is Mg(2+). It depends on Zn(2+) as a cofactor. NADPH serves as cofactor.

It catalyses the reaction methanol + A = formaldehyde + AH2. Functionally, catalyzes the oxidation of methanol to yield formaldehyde. While the in vivo electron acceptor is not known, N,N-dimethyl-4-nitrosoaniline (NDMA) can serve this function in vitro and is reduced to 4-(hydroxylamino)-N,N-dimethylaniline. The polypeptide is Methanol:N,N-dimethyl-4-nitrosoaniline oxidoreductase (thcE) (Rhodococcus erythropolis (Arthrobacter picolinophilus)).